A 385-amino-acid polypeptide reads, in one-letter code: Podocin (385 aa).

A compositionally biased stretch (basic and acidic residues) spans 1 to 27 (MDSRARSSSREAHGRSSRSSSRDDKKA). The segment at 1–64 (MDSRARSSSR…GEPRAPAATA (64 aa)) is disordered. Residues 1 to 104 (MDSRARSSSR…IKPSGLGACE (104 aa)) lie on the Cytoplasmic side of the membrane. The S-palmitoyl cysteine moiety is linked to residue Cys-103. Residues 105–125 (WLLVLASLIFIIMTFPFSIWF) form a helical membrane-spanning segment. The Extracellular segment spans residues 126 to 385 (CIKVVQEYER…NPKKKDSPML (260 aa)). Residues 357 to 370 (NRAQGSINYPSSSK) show a composition bias toward polar residues. The interval 357-385 (NRAQGSINYPSSSKPVEPLNPKKKDSPML) is disordered. Residues 376 to 385 (NPKKKDSPML) are compositionally biased toward basic and acidic residues.

It belongs to the band 7/mec-2 family. In terms of assembly, interacts with nephrin/NPHS1, KIRRL1 and CD2AP. Interacts with DDN.

It is found in the membrane. Plays a role in the regulation of glomerular permeability, acting probably as a linker between the plasma membrane and the cytoskeleton. This Mus musculus (Mouse) protein is Podocin (Nphs2).